The following is a 260-amino-acid chain: Phosphate import ATP-binding protein PstB 1 (260 aa).

Residues 13 to 255 (VRVRDLNLWY…PHTKKAEDYI (243 aa)) form the ABC transporter domain. 45–52 (GPSGCGKS) contributes to the ATP binding site.

The protein belongs to the ABC transporter superfamily. Phosphate importer (TC 3.A.1.7) family. In terms of assembly, the complex is composed of two ATP-binding proteins (PstB), two transmembrane proteins (PstC and PstA) and a solute-binding protein (PstS).

It localises to the cell inner membrane. The catalysed reaction is phosphate(out) + ATP + H2O = ADP + 2 phosphate(in) + H(+). Its function is as follows. Part of the ABC transporter complex PstSACB involved in phosphate import. Responsible for energy coupling to the transport system. In Chromohalobacter salexigens (strain ATCC BAA-138 / DSM 3043 / CIP 106854 / NCIMB 13768 / 1H11), this protein is Phosphate import ATP-binding protein PstB 1.